Here is a 40-residue protein sequence, read N- to C-terminus: MADTTGRIPLWIVGTVTGILVIGLIGVFFYGSYSGLGSSL.

The helical transmembrane segment at 8-28 threads the bilayer; that stretch reads IPLWIVGTVTGILVIGLIGVF.

The protein belongs to the PsbJ family. PSII is composed of 1 copy each of membrane proteins PsbA, PsbB, PsbC, PsbD, PsbE, PsbF, PsbH, PsbI, PsbJ, PsbK, PsbL, PsbM, PsbT, PsbX, PsbY, PsbZ, Psb30/Ycf12, at least 3 peripheral proteins of the oxygen-evolving complex and a large number of cofactors. It forms dimeric complexes.

The protein localises to the plastid. Its subcellular location is the chloroplast thylakoid membrane. One of the components of the core complex of photosystem II (PSII). PSII is a light-driven water:plastoquinone oxidoreductase that uses light energy to abstract electrons from H(2)O, generating O(2) and a proton gradient subsequently used for ATP formation. It consists of a core antenna complex that captures photons, and an electron transfer chain that converts photonic excitation into a charge separation. The protein is Photosystem II reaction center protein J of Coffea arabica (Arabian coffee).